A 771-amino-acid chain; its full sequence is DNA polymerase 1 (771 aa).

Belongs to the DNA polymerase type-B family.

It carries out the reaction DNA(n) + a 2'-deoxyribonucleoside 5'-triphosphate = DNA(n+1) + diphosphate. The protein is DNA polymerase 1 (polI) of Pyrococcus abyssi.